A 699-amino-acid chain; its full sequence is MRCQHCHQNEATIRLNMQINSVHKQMVLCETCYNELTRKPSMSMGPQSFGFPFEQAFQPKEQSAAKQSEKKGLLDELAQNITNGAKAGLIDPVIGRDDEVARVIEILNRRNKNNPVLIGEPGVGKTAIAEGLALKIAEGDVPNKLKNKELYLLDVASLVANTGIRGQFEERMKQLITELKERKNVILFIDEIHLLVGAGSAEGSMDAGNILKPALARGELQVIGATTLKEYRQIEKDAALERRFQPVMVQEPSIEQAILILQGIKDKYEAYHGVTFSDEAIKACVTLSSRYIQDRHLPDKAIDLLDEAGSKANLLIDELNDEDAAERLTAIEAEKTKALEEENYELAAKLRDEELALEKKLNSSSAHTAVTVEAEHIQEIVEQKTGIPVGKLQADEQTKMKELEAKLHERVIGQEAAVQKVAKAVRRSRAGLKSKNRPVGSFLFVGPTGVGKTELSKTLADELFGTKDAIIRLDMSEYMEKHAVSKIIGSPPGYVGHEEAGQLTEKVRRNPYSIVLLDEIEKAHPDVQHMFLQIMEDGRLTDSQGRTVSFKDTVIIMTSNAGAGEKQTKVGFQSDDSVIEEQTLIDSLSMFFKPEFLNRFDSIIEFRSLEKEHLVKIVSLLLGELEETLAERGISLNVTDEAKEKIAELGYHPSFGARPLRRTIQEWVEDEMTDLLLDNGEITSFHVILEDDKIKVRAK.

A C4-type zinc finger spans residues 3 to 32 (CQHCHQNEATIRLNMQINSVHKQMVLCETC). 119-126 (GEPGVGKT) contributes to the ATP binding site. A UVR domain is found at 325–360 (AERLTAIEAEKTKALEEENYELAAKLRDEELALEKK). An ATP-binding site is contributed by 446-453 (GPTGVGKT).

The protein belongs to the ClpA/ClpB family. ClpE subfamily. In terms of assembly, interacts with ClpP. Post-translationally, clpE is a very short-lived protein, that is, at least in the soluble cell fraction, degraded mainly by ClpCP.

ATPase essential both for efficient CtsR-dependent gene derepression during heat stress and for rerepression. Together with ClpP, degrades the global regulator CtsR after heat shock. Is also involved in disaggregation of heat-denatured proteins. Has thus a role in overall protein quality control in response to heat stress. This Bacillus subtilis (strain 168) protein is ATP-dependent Clp protease ATP-binding subunit ClpE (clpE).